Reading from the N-terminus, the 303-residue chain is Probable 5-dehydro-4-deoxyglucarate dehydratase (303 aa).

The protein belongs to the DapA family.

The catalysed reaction is 5-dehydro-4-deoxy-D-glucarate + H(+) = 2,5-dioxopentanoate + CO2 + H2O. Its pathway is carbohydrate acid metabolism; D-glucarate degradation; 2,5-dioxopentanoate from D-glucarate: step 2/2. The chain is Probable 5-dehydro-4-deoxyglucarate dehydratase from Acinetobacter baumannii (strain AB307-0294).